The sequence spans 525 residues: Packaging protein UL32 homolog (525 aa).

A compositionally biased stretch (polar residues) spans 1-12 (MAHKVTSANEPN). A disordered region spans residues 1–20 (MAHKVTSANEPNPLTGKRLS). Residues Cys-95, Cys-98, His-173, Cys-179, Cys-255, Cys-256, Cys-357, Cys-360, His-427, Cys-434, Cys-473, and His-510 each coordinate Zn(2+). Zinc finger stretches follow at residues 95 to 179 (CRVC…ICRC), 255 to 510 (CCHL…LRIH), and 357 to 434 (CPLC…DPLC).

It belongs to the herpesviridae UL32 protein family.

Its subcellular location is the host cytoplasm. It is found in the host nucleus. Functionally, plays a role in efficient localization of neo-synthesized capsids to nuclear replication compartments, thereby controlling cleavage and packaging of virus genomic DNA. This Epstein-Barr virus (strain B95-8) (HHV-4) protein is Packaging protein UL32 homolog.